Consider the following 811-residue polypeptide: Phenylalanine--tRNA ligase beta subunit (811 aa).

Residues 39–151 form the tRNA-binding domain; it reads RTWAAGVVVG…AGLQAGQPVG (113 aa). The B5 domain maps to 409–495; sequence EPEHSITLRL…RLYGYDNFGE (87 aa). Residues aspartate 473, aspartate 479, glutamate 482, and glutamate 483 each contribute to the Mg(2+) site. The FDX-ACB domain maps to 717–810; that stretch reads SSFPASDRDL…LVERFRVTLR (94 aa).

This sequence belongs to the phenylalanyl-tRNA synthetase beta subunit family. Type 1 subfamily. Tetramer of two alpha and two beta subunits. Requires Mg(2+) as cofactor.

The protein resides in the cytoplasm. The catalysed reaction is tRNA(Phe) + L-phenylalanine + ATP = L-phenylalanyl-tRNA(Phe) + AMP + diphosphate + H(+). This is Phenylalanine--tRNA ligase beta subunit from Synechococcus sp. (strain ATCC 27144 / PCC 6301 / SAUG 1402/1) (Anacystis nidulans).